Consider the following 137-residue polypeptide: Large ribosomal subunit protein uL16 (137 aa).

Belongs to the universal ribosomal protein uL16 family. Part of the 50S ribosomal subunit.

Its function is as follows. Binds 23S rRNA and is also seen to make contacts with the A and possibly P site tRNAs. In Bartonella tribocorum (strain CIP 105476 / IBS 506), this protein is Large ribosomal subunit protein uL16.